Consider the following 1280-residue polypeptide: Rho guanine nucleotide exchange factor 10-like protein (1280 aa).

The span at 1-10 shows a compositional bias: pro residues; sequence MASSNPPPQP. The interval 1–94 is disordered; that stretch reads MASSNPPPQP…TEAPTVVSNG (94 aa). Positions 26-46 are enriched in acidic residues; the sequence is EVEEDSGEAFEFDDSDEEEDT. Ser40 carries the phosphoserine modification. Over residues 78-89 the composition is skewed to low complexity; that stretch reads PAAAPPQTEAPT. 2 positions are modified to phosphotyrosine: Tyr131 and Tyr152. The interval 161–202 is disordered; that stretch reads PRETEDLGWSSSEFESYSEDSGEETKPEAEPTKHRGSFQPKL. A compositionally biased stretch (basic and acidic residues) spans 183–193; the sequence is EETKPEAEPTK. Position 279 is a phosphoserine (Ser279). The 188-residue stretch at 314–501 folds into the DH domain; the sequence is VRRHILGSIV…ETLAEKLNEQ (188 aa). Disordered regions lie at residues 1133–1163 and 1186–1207; these read QEEA…HTAR and PLLS…SEED.

As to quaternary structure, interacts with RHOA, RHOB and RHOC.

It localises to the cytoplasm. Its function is as follows. Acts as a guanine nucleotide exchange factor (GEF) for RHOA, RHOB and RHOC. The sequence is that of Rho guanine nucleotide exchange factor 10-like protein (Arhgef10l) from Mus musculus (Mouse).